We begin with the raw amino-acid sequence, 369 residues long: Anhydro-N-acetylmuramic acid kinase (369 aa).

Residue 12-19 (GTSLDGVD) coordinates ATP.

It belongs to the anhydro-N-acetylmuramic acid kinase family.

It catalyses the reaction 1,6-anhydro-N-acetyl-beta-muramate + ATP + H2O = N-acetyl-D-muramate 6-phosphate + ADP + H(+). It participates in amino-sugar metabolism; 1,6-anhydro-N-acetylmuramate degradation. It functions in the pathway cell wall biogenesis; peptidoglycan recycling. Its function is as follows. Catalyzes the specific phosphorylation of 1,6-anhydro-N-acetylmuramic acid (anhMurNAc) with the simultaneous cleavage of the 1,6-anhydro ring, generating MurNAc-6-P. Is required for the utilization of anhMurNAc either imported from the medium or derived from its own cell wall murein, and thus plays a role in cell wall recycling. This Escherichia coli (strain K12 / MC4100 / BW2952) protein is Anhydro-N-acetylmuramic acid kinase.